The chain runs to 216 residues: Phosphoenolpyruvate guanylyltransferase (216 aa).

Residues Thr-139, Gly-155, and Ser-158 each coordinate phosphoenolpyruvate.

The protein belongs to the CofC family.

It carries out the reaction phosphoenolpyruvate + GTP + H(+) = enolpyruvoyl-2-diphospho-5'-guanosine + diphosphate. The protein operates within cofactor biosynthesis; coenzyme F420 biosynthesis. In terms of biological role, guanylyltransferase that catalyzes the activation of phosphoenolpyruvate (PEP) as enolpyruvoyl-2-diphospho-5'-guanosine, via the condensation of PEP with GTP. It is involved in the biosynthesis of coenzyme F420, a hydride carrier cofactor. In Streptomyces avermitilis (strain ATCC 31267 / DSM 46492 / JCM 5070 / NBRC 14893 / NCIMB 12804 / NRRL 8165 / MA-4680), this protein is Phosphoenolpyruvate guanylyltransferase.